The chain runs to 578 residues: Adhesion G protein-coupled receptor A1 (578 aa).

Topologically, residues 1–22 are extracellular; that stretch reads MTQWDLKTVLSLPQYPGEFLHP. Residues 23 to 43 traverse the membrane as a helical segment; the sequence is VVYACTAVMLLCLLASVITYI. Residues 44 to 56 lie on the Cytoplasmic side of the membrane; that stretch reads LHQSAIRISRKGR. Residues 57–77 form a helical membrane-spanning segment; the sequence is HALLNFCFHAALTFTVFAGGI. Over 78–87 the chain is Extracellular; sequence NRTQHPILCQ. Residues 88-108 form a helical membrane-spanning segment; that stretch reads AVGIALHYSTLSTMLWIGVTA. The Cytoplasmic portion of the chain corresponds to 109–137; sequence RNIYKQVTKKALPCPGADQPPYPKQPLLR. A helical membrane pass occupies residues 138-158; it reads FYLISGGVPFIICGVTAATNI. Residues 159 to 178 are Extracellular-facing; the sequence is RNYGTEDEDVAYCWMAWEPS. Residues 179 to 199 form a helical membrane-spanning segment; it reads LGAFYGPAAFIALVTCVYFLC. The Cytoplasmic portion of the chain corresponds to 200 to 262; the sequence is TYVQLRRHPE…NEHSFKAQLR (63 aa). The segment at 216 to 236 is disordered; it reads ERTEEQQRLAVPESGHRHGVR. A helical membrane pass occupies residues 263–283; that stretch reads AAAFTLFLFTATWTFGALAVS. At 284 to 289 the chain is on the extracellular side; sequence QGHFLD. A helical transmembrane segment spans residues 290 to 310; the sequence is MIFSCLYGAFCVTLGLFVLIH. 2 disordered regions span residues 463–486 and 537–578; these read PSSLDGSPHSSRSESPTSSLEGPM and SLPF…ETTV. Over residues 469–481 the composition is skewed to low complexity; that stretch reads SPHSSRSESPTSS. Over residues 537–548 the composition is skewed to polar residues; sequence SLPFGGPSQNGL.

The protein belongs to the G-protein coupled receptor 2 family. Adhesion G-protein coupled receptor (ADGR) subfamily. Predominantly expressed in CNS.

It is found in the membrane. The polypeptide is Adhesion G protein-coupled receptor A1 (Mus musculus (Mouse)).